The following is a 351-amino-acid chain: Selenide, water dikinase (351 aa).

The active site involves C20. ATP-binding positions include K23 and 51 to 53 (TKD). D54 is a binding site for Mg(2+). ATP-binding positions include D71, D94, and 142 to 144 (GHS). Mg(2+) is bound at residue D94. Mg(2+) is bound at residue D230.

It belongs to the selenophosphate synthase 1 family. Class I subfamily. As to quaternary structure, homodimer. Requires Mg(2+) as cofactor.

It catalyses the reaction hydrogenselenide + ATP + H2O = selenophosphate + AMP + phosphate + 2 H(+). Functionally, synthesizes selenophosphate from selenide and ATP. This Pasteurella multocida (strain Pm70) protein is Selenide, water dikinase.